Reading from the N-terminus, the 420-residue chain is Small ribosomal subunit protein mS75 (420 aa).

Residues 1–11 constitute a mitochondrion transit peptide; it reads MYNLSRIIYRF. Disordered regions lie at residues 99–120 and 390–420; these read RQKN…DVMS and RYSP…GKQT. Residues 102 to 114 show a composition bias toward polar residues; it reads NAANPSSDNTPSD. Positions 396 to 409 are enriched in basic residues; the sequence is QKRRSKRKQKRKER.

As to quaternary structure, component of the mitochondrial ribosome small subunit. As to expression, expressed at high levels in reproductive organs and, at lower levels, ubiquitously.

Its subcellular location is the mitochondrion. Functionally, essential for fertility (male and female gametophyte functions and development). Required for the integrity of female gametic mitochondria. Modulates male gametophyte functions, including pollen tube growth and style penetration. Involved in mitochondrial-driven cell-to-cell communication in embryo sacs during female gametes maturation (including embryogenesis initiation and endosperm development), especially for reciprocal signaling between central and egg cells which regulates reciprocal development. The polypeptide is Small ribosomal subunit protein mS75 (Arabidopsis thaliana (Mouse-ear cress)).